The sequence spans 87 residues: Homeotic protein ultrabithorax (87 aa).

The Antp-type hexapeptide motif lies at 22 to 27; that stretch reads FYPWMA.

This sequence belongs to the Antp homeobox family. In terms of tissue distribution, in the embryo, expression is seen in the epidermis, somatic and visceral mesoderm, and the peripheral and central nervous system.

It localises to the nucleus. Its function is as follows. Sequence-specific transcription factor which is part of a developmental regulatory system that provides cells with specific positional identities on the anterior-posterior axis. Binds the consensus region 5'-TTAAT[GT][GA]-3'. This homeotic protein controls development of the cells in the posterior thoracic and first abdominal segments. It activates the synthesis of the decapentaplegic (DPP) growth factor. The protein is Homeotic protein ultrabithorax (Ubx) of Drosophila virilis (Fruit fly).